Reading from the N-terminus, the 905-residue chain is Alanine--tRNA ligase (905 aa).

Histidine 569, histidine 573, cysteine 693, and histidine 697 together coordinate Zn(2+).

It belongs to the class-II aminoacyl-tRNA synthetase family. The cofactor is Zn(2+).

It localises to the cytoplasm. It carries out the reaction tRNA(Ala) + L-alanine + ATP = L-alanyl-tRNA(Ala) + AMP + diphosphate. In terms of biological role, catalyzes the attachment of alanine to tRNA(Ala) in a two-step reaction: alanine is first activated by ATP to form Ala-AMP and then transferred to the acceptor end of tRNA(Ala). Also edits incorrectly charged Ser-tRNA(Ala) and Gly-tRNA(Ala) via its editing domain. The polypeptide is Alanine--tRNA ligase (Roseiflexus castenholzii (strain DSM 13941 / HLO8)).